Reading from the N-terminus, the 372-residue chain is Alpha-1-antitrypsin homolog (372 aa).

Positions 1–19 (MPATCLLHTMLTLPSPSTR) are cleaved as a signal peptide. N-linked (GlcNAc...) asparagine glycosylation is found at Asn-214 and Asn-226. The RCL stretch occupies residues 328-347 (AATTIEIMPMSLPDTVILNR).

The protein belongs to the serpin family.

It localises to the secreted. In Cyprinus carpio (Common carp), this protein is Alpha-1-antitrypsin homolog.